Consider the following 38-residue polypeptide: Potassium channel toxin alpha-KTx 3.17 (38 aa).

Disulfide bonds link Cys-8–Cys-28, Cys-14–Cys-33, and Cys-18–Cys-35.

The protein belongs to the short scorpion toxin superfamily. Potassium channel inhibitor family. Alpha-KTx 03 subfamily. In terms of tissue distribution, expressed by the venom gland.

It localises to the secreted. Completely inhibits the (125)I-kaliotoxin binding on rat brain synaptosomes with high-affinity (IC(50)=0.1 nM). Is a potent Kv1.3/KCNA3 ligand. The polypeptide is Potassium channel toxin alpha-KTx 3.17 (Buthus paris (Scorpion)).